We begin with the raw amino-acid sequence, 381 residues long: Probable serine/threonine-protein kinase PBL25 (381 aa).

Cysteine 3 carries the S-palmitoyl cysteine lipid modification. The segment at 16–41 (GSSMPAPYKQPNSPKRTTGEVVAKNA) is disordered. Phosphothreonine is present on threonine 54. In terms of domain architecture, Protein kinase spans 65 to 342 (FRQECLIGEG…SDVITALSFL (278 aa)). ATP contacts are provided by residues 71-79 (IGEGGFGRV) and lysine 94. A Phosphotyrosine modification is found at tyrosine 139. The active-site Proton acceptor is aspartate 192. Serine 196 and serine 226 each carry phosphoserine. Residue threonine 232 is modified to Phosphothreonine. The residue at position 240 (tyrosine 240) is a Phosphotyrosine. Residues 347 to 381 (NSSNTGSNHLQQNRSNKYQDAVQWDSSPRYANSQM) are disordered. Polar residues predominate over residues 355 to 381 (HLQQNRSNKYQDAVQWDSSPRYANSQM).

It belongs to the protein kinase superfamily. Ser/Thr protein kinase family.

It is found in the cell membrane. The catalysed reaction is L-seryl-[protein] + ATP = O-phospho-L-seryl-[protein] + ADP + H(+). It carries out the reaction L-threonyl-[protein] + ATP = O-phospho-L-threonyl-[protein] + ADP + H(+). Its function is as follows. May be involved in plant defense signaling. This is Probable serine/threonine-protein kinase PBL25 from Arabidopsis thaliana (Mouse-ear cress).